Consider the following 255-residue polypeptide: Reaction center protein L chain (255 aa).

3 consecutive transmembrane segments (helical) span residues 12–35, 64–92, and 95–120; these read GFFG…GTAL, GLWQ…RKLG, and LHIP…LLLG. (7R,8Z)-bacteriochlorophyll b contacts are provided by His-133 and His-153. A helical transmembrane segment spans residues 150-179; it reads NPAHMIGITFFFTNCMAFGMHGSIILSVLN. Residue His-170 participates in Fe cation binding. Phe-196 provides a ligand contact to a ubiquinone. The chain crosses the membrane as a helical span at residues 205 to 231; sequence GTLGIHRLGVFLAISAAFWSAVCIILS. His-210 is a Fe cation binding site.

Belongs to the reaction center PufL/M/PsbA/D family. Reaction center is composed of four bacteriochlorophylls, two bacteriopheophytins, two ubiquinones, one iron, and three highly hydrophobic polypeptide chains (designated L, M, and H).

It localises to the cellular chromatophore membrane. The reaction center is a membrane-bound complex that mediates the initial photochemical event in the electron transfer process of photosynthesis. The chain is Reaction center protein L chain (pufL) from Pararhodospirillum photometricum (Rhodospirillum photometricum).